A 139-amino-acid chain; its full sequence is ATP synthase epsilon chain (139 aa).

The protein belongs to the ATPase epsilon chain family. In terms of assembly, F-type ATPases have 2 components, CF(1) - the catalytic core - and CF(0) - the membrane proton channel. CF(1) has five subunits: alpha(3), beta(3), gamma(1), delta(1), epsilon(1). CF(0) has three main subunits: a, b and c.

It localises to the cell membrane. Functionally, produces ATP from ADP in the presence of a proton gradient across the membrane. This chain is ATP synthase epsilon chain, found in Streptococcus sanguinis.